A 101-amino-acid polypeptide reads, in one-letter code: Anti-sigma factor RshA (101 aa).

Residues 1-20 (MSETEREDERWTPPIGPIDP) form a disordered region. 4 residues coordinate iron-sulfur cluster: Cys25, His51, Cys55, and Cys58. Thr96 carries the phosphothreonine modification.

It belongs to the zinc-associated anti-sigma factor (ZAS) superfamily. In terms of assembly, interacts with cognate ECF RNA polymerase sigma factor SigH under reducing conditions; the complex is disrupted under oxiding conditions or as temperatures rise. Binding inhibits the interaction of SigH with the RNA polymerase catalytic core. Requires iron-sulfur cluster as cofactor. Phosphorylated, probably by PknB. Phosphorylation decreases interaction with SigH, probably leading to increased SigH-mediated transcription.

Its function is as follows. A redox-regulated anti-sigma factor for cognate extracytoplasmic function (ECF) sigma factor SigH. ECF sigma factors are held in an inactive form by an anti-sigma factor. Overexpression leads to increased susceptibility to diamide. The chain is Anti-sigma factor RshA (rshA) from Mycolicibacterium smegmatis (strain ATCC 700084 / mc(2)155) (Mycobacterium smegmatis).